The sequence spans 241 residues: Eukaryotic translation initiation factor 3 subunit J (241 aa).

Residues 1 to 27 (MEEDWEQHGEKEEVPLPAKKPDANKWD) show a composition bias toward basic and acidic residues. The tract at residues 1–99 (MEEDWEQHGE…ENMTPEQKLA (99 aa)) is disordered. Acidic residues predominate over residues 28 to 45 (GEDEEEEVKDSWEDEDEL). Positions 31-119 (EEEEVKDSWE…ESDLKNALDT (89 aa)) form a coiled coil. Composition is skewed to basic and acidic residues over residues 46 to 58 (EEKKDEEKVETPK) and 69 to 90 (IVEKEKQKHEEAERRRLEKEAE).

Belongs to the eIF-3 subunit J family. As to quaternary structure, component of the eukaryotic translation initiation factor 3 (eIF-3) complex.

It is found in the cytoplasm. Its function is as follows. Component of the eukaryotic translation initiation factor 3 (eIF-3) complex, which is involved in protein synthesis of a specialized repertoire of mRNAs and, together with other initiation factors, stimulates binding of mRNA and methionyl-tRNAi to the 40S ribosome. The eIF-3 complex specifically targets and initiates translation of a subset of mRNAs involved in cell proliferation. The chain is Eukaryotic translation initiation factor 3 subunit J from Culex quinquefasciatus (Southern house mosquito).